A 90-amino-acid chain; its full sequence is DNA-directed RNA polymerase subunit omega (90 aa).

Belongs to the RNA polymerase subunit omega family. In terms of assembly, the RNAP catalytic core consists of 2 alpha, 1 beta, 1 beta' and 1 omega subunit. When a sigma factor is associated with the core the holoenzyme is formed, which can initiate transcription.

It catalyses the reaction RNA(n) + a ribonucleoside 5'-triphosphate = RNA(n+1) + diphosphate. Functionally, promotes RNA polymerase assembly. Latches the N- and C-terminal regions of the beta' subunit thereby facilitating its interaction with the beta and alpha subunits. In Alteromonas mediterranea (strain DSM 17117 / CIP 110805 / LMG 28347 / Deep ecotype), this protein is DNA-directed RNA polymerase subunit omega.